The primary structure comprises 158 residues: Cyclic pyranopterin monophosphate synthase (158 aa).

Substrate contacts are provided by residues 75 to 77 (LCH) and 113 to 114 (ME). Asp-128 is an active-site residue.

It belongs to the MoaC family. In terms of assembly, homohexamer; trimer of dimers.

The catalysed reaction is (8S)-3',8-cyclo-7,8-dihydroguanosine 5'-triphosphate = cyclic pyranopterin phosphate + diphosphate. It participates in cofactor biosynthesis; molybdopterin biosynthesis. Catalyzes the conversion of (8S)-3',8-cyclo-7,8-dihydroguanosine 5'-triphosphate to cyclic pyranopterin monophosphate (cPMP). The polypeptide is Cyclic pyranopterin monophosphate synthase (Actinobacillus succinogenes (strain ATCC 55618 / DSM 22257 / CCUG 43843 / 130Z)).